We begin with the raw amino-acid sequence, 511 residues long: Thioredoxin reductase 2, mitochondrial (511 aa).

The transit peptide at 1–21 directs the protein to the mitochondrion; that stretch reads MAALRGAAARFRGRAPGGARG. An FAD-binding site is contributed by 29–58; the sequence is DLLVIGGGSGGLACAKEAAQLGKKVAVLDY. Residues Cys-74 and Cys-79 are joined by a disulfide bond. Lys-316 is subject to N6-succinyllysine. Catalysis depends on His-484, which acts as the Proton acceptor. Residues 509 to 510 constitute a cross-link (cysteinyl-selenocysteine (Cys-Sec)); the sequence is CU. Position 510 (Sec-510) is a non-standard amino acid, selenocysteine.

This sequence belongs to the class-I pyridine nucleotide-disulfide oxidoreductase family. As to quaternary structure, homodimer. FAD is required as a cofactor.

Its subcellular location is the mitochondrion. The enzyme catalyses [thioredoxin]-dithiol + NADP(+) = [thioredoxin]-disulfide + NADPH + H(+). Its activity is regulated as follows. Inhibited by 1-chloro-2,4-dinitrobenzene and by zinc, calcium, magnesium and Fe(2+) ions. In terms of biological role, involved in the control of reactive oxygen species levels and the regulation of mitochondrial redox homeostasis. Maintains thioredoxin in a reduced state. May play a role in redox-regulated cell signaling. In Bos taurus (Bovine), this protein is Thioredoxin reductase 2, mitochondrial (TXNRD2).